A 200-amino-acid chain; its full sequence is Methylthioribulose-1-phosphate dehydratase-like protein (200 aa).

The protein belongs to the aldolase class II family. MtnB subfamily.

This is Methylthioribulose-1-phosphate dehydratase-like protein from Schizosaccharomyces pombe (strain 972 / ATCC 24843) (Fission yeast).